A 566-amino-acid chain; its full sequence is 5'-AMP-activated protein kinase subunit gamma-2 (566 aa).

The interval 1–198 (MGSAAMDTKK…SRIYASSSPP (198 aa)) is disordered. Low complexity predominate over residues 15–25 (SSPGGSSGKKN). Residues 54–64 (NSEKHSSRKVD) show a composition bias toward basic and acidic residues. A phosphoserine mark is found at Ser-65, Ser-71, Ser-73, Ser-90, Ser-138, Ser-143, Ser-158, Ser-161, and Ser-162. Composition is skewed to low complexity over residues 132 to 144 (KESS…STSP) and 156 to 172 (TSSV…VTKQ). Thr-165 bears the Phosphothreonine mark. Positions 180 to 189 (YKQEPERPES) are enriched in basic and acidic residues. Phosphoserine is present on Ser-196. CBS domains follow at residues 272–332 (PTSS…KSPM), 354–412 (TFKP…MSDM), and 427–489 (IGTY…NLDI). Residues Arg-299, 314–319 (MLTITD), Val-359, 380–381 (HR), and Lys-399 each bind ADP. Residues Arg-299, 314-319 (MLTITD), Val-359, His-380, 380-381 (HR), Lys-399, Thr-429, Ala-434, 455-456 (SA), 471-474 (SKFD), Arg-498, His-527, 527-528 (HR), and 543-546 (SLSD) contribute to the AMP site. ATP is bound by residues Arg-299, 314-319 (MLTITD), Val-359, 380-381 (HR), Arg-381, and Lys-399. Residues 367–388 (LFDAVYSLIKNKIHRLPVIDPI) carry the AMPK pseudosubstrate motif. Residues 471–474 (SKFD), Arg-498, and 527–528 (HR) contribute to the ADP site. ATP-binding positions include 471-474 (SKFD), Arg-498, and 527-528 (HR). Residues 501-559 (YFEGVVKCSKLETLETIVDRIVRAEVHRLVVVNEADSIVGIISLSDILQALILTPAGAK) form the CBS 4 domain.

This sequence belongs to the 5'-AMP-activated protein kinase gamma subunit family. AMPK is a heterotrimer of an alpha catalytic subunit (PRKAA1 or PRKAA2), a beta (PRKAB1 or PRKAB2) and a gamma non-catalytic subunits (PRKAG1, PRKAG2 or PRKAG3). Interacts with FNIP1 and FNIP2. Post-translationally, phosphorylated by ULK1; leading to negatively regulate AMPK activity and suggesting the existence of a regulatory feedback loop between ULK1 and AMPK. In terms of processing, glycosylated; O-GlcNAcylated by OGT, promoting the AMP-activated protein kinase (AMPK) activity.

AMP/ATP-binding subunit of AMP-activated protein kinase (AMPK), an energy sensor protein kinase that plays a key role in regulating cellular energy metabolism. In response to reduction of intracellular ATP levels, AMPK activates energy-producing pathways and inhibits energy-consuming processes: inhibits protein, carbohydrate and lipid biosynthesis, as well as cell growth and proliferation. AMPK acts via direct phosphorylation of metabolic enzymes, and by longer-term effects via phosphorylation of transcription regulators. Also acts as a regulator of cellular polarity by remodeling the actin cytoskeleton; probably by indirectly activating myosin. Gamma non-catalytic subunit mediates binding to AMP, ADP and ATP, leading to activate or inhibit AMPK: AMP-binding results in allosteric activation of alpha catalytic subunit (PRKAA1 or PRKAA2) both by inducing phosphorylation and preventing dephosphorylation of catalytic subunits. ADP also stimulates phosphorylation, without stimulating already phosphorylated catalytic subunit. ATP promotes dephosphorylation of catalytic subunit, rendering the AMPK enzyme inactive. The chain is 5'-AMP-activated protein kinase subunit gamma-2 (Prkag2) from Mus musculus (Mouse).